The following is a 121-amino-acid chain: Large ribosomal subunit protein bL12 (121 aa).

This sequence belongs to the bacterial ribosomal protein bL12 family. In terms of assembly, homodimer. Part of the ribosomal stalk of the 50S ribosomal subunit. Forms a multimeric L10(L12)X complex, where L10 forms an elongated spine to which 2 to 4 L12 dimers bind in a sequential fashion. Binds GTP-bound translation factors.

In terms of biological role, forms part of the ribosomal stalk which helps the ribosome interact with GTP-bound translation factors. Is thus essential for accurate translation. This Shigella sonnei (strain Ss046) protein is Large ribosomal subunit protein bL12.